The primary structure comprises 154 residues: Superoxide dismutase [Cu-Zn] (154 aa).

Residues His-47, His-49, and His-64 each contribute to the Cu cation site. A disulfide bridge connects residues Cys-58 and Cys-147. 4 residues coordinate Zn(2+): His-64, His-72, His-81, and Asp-84. His-121 lines the Cu cation pocket. The span at 125 to 136 (DDLGKGGNEESL) shows a compositional bias: basic and acidic residues. Positions 125 to 144 (DDLGKGGNEESLKTGNAGPR) are disordered. Arg-144 serves as a coordination point for substrate.

The protein belongs to the Cu-Zn superoxide dismutase family. As to quaternary structure, homodimer. Cu cation is required as a cofactor. Requires Zn(2+) as cofactor.

The protein localises to the cytoplasm. It carries out the reaction 2 superoxide + 2 H(+) = H2O2 + O2. Functionally, destroys radicals which are normally produced within the cells and which are toxic to biological systems. This Candida glabrata (strain ATCC 2001 / BCRC 20586 / JCM 3761 / NBRC 0622 / NRRL Y-65 / CBS 138) (Yeast) protein is Superoxide dismutase [Cu-Zn] (SOD1).